Consider the following 78-residue polypeptide: RNA-binding protein Hfq (78 aa).

In terms of domain architecture, Sm spans 10 to 69 (DPFLNTLRKEHVPVSIYLVNGIKLQGQIESFDQYVVLLRNTVTQMVYKHAISTVVPARAV).

The protein belongs to the Hfq family. In terms of assembly, homohexamer.

RNA chaperone that binds small regulatory RNA (sRNAs) and mRNAs to facilitate mRNA translational regulation in response to envelope stress, environmental stress and changes in metabolite concentrations. Also binds with high specificity to tRNAs. The polypeptide is RNA-binding protein Hfq (Bordetella avium (strain 197N)).